A 1557-amino-acid chain; its full sequence is ABC transporter atnG (1557 aa).

5 consecutive transmembrane segments (helical) span residues 27–47 (FTLY…LILA), 70–90 (LKLL…AFWM), 99–119 (LTIA…YLIH), 131–151 (IISI…RTIW), and 159–179 (VSAI…LETW). N-linked (GlcNAc...) asparagine glycosylation is found at Asn202 and Asn249. The next 6 helical transmembrane spans lie at 256–276 (AGAM…AGVF), 311–331 (ATLL…ATAT), 385–405 (YIHD…LLYN), 412–432 (IAPI…AMMA), 490–510 (LLIA…IVSF), and 531–551 (LTSL…VESI). The ABC transmembrane type-1 1 domain maps to 279–556 (LCQSGFIISQ…LVESISETAM (278 aa)). An ABC transporter 1 domain is found at 593 to 829 (AFEVDVGWKN…LDYIQGFAIA (237 aa)). 625–632 (GAVGCGKT) provides a ligand contact to ATP. N-linked (GlcNAc...) asparagine glycosylation is present at Asn667. A helical transmembrane segment spans residues 882 to 902 (LVYFGLMAIFVFLQAFPTVWV). The 281-residue stretch at 882–1162 (LVYFGLMAIF…LITDWTVLET (281 aa)) folds into the ABC transmembrane type-1 2 domain. The N-linked (GlcNAc...) asparagine glycan is linked to Asn916. 4 helical membrane-spanning segments follow: residues 921-941 (IGVY…TACF), 996-1016 (AVLQ…IIAV), 1020-1040 (YITA…TFYM), and 1105-1125 (LSLV…GIAV). An N-linked (GlcNAc...) asparagine glycan is attached at Asn1132. A helical transmembrane segment spans residues 1135 to 1155 (SLGLALVNVVSLSASVKALIT). The region spanning 1199–1431 (VEYKNVSAFY…PSVFRELYKS (233 aa)) is the ABC transporter 2 domain. Residues Asn1203 and Asn1218 are each glycosylated (N-linked (GlcNAc...) asparagine). An ATP-binding site is contributed by 1233–1240 (GRSGSGKS). 2 disordered regions span residues 1439–1464 (ERQE…EELR) and 1503–1557 (RTRS…RGLH). The span at 1507–1522 (RSRDHSAERRESKRYS) shows a compositional bias: basic and acidic residues.

The protein belongs to the ABC transporter superfamily. ABCC family. Conjugate transporter (TC 3.A.1.208) subfamily.

Its subcellular location is the cell membrane. In terms of biological role, ABC transporter; part of the gene cluster that mediates the biosynthesis of aspercryptins, linear lipopeptides built from six amino acids including 2 highly unusual and nonproteogenic amino acids, 2-amino-octanoic acid (2aoa) and 2-amino-dodecanol (2adol). The polypeptide is ABC transporter atnG (Emericella nidulans (strain FGSC A4 / ATCC 38163 / CBS 112.46 / NRRL 194 / M139) (Aspergillus nidulans)).